We begin with the raw amino-acid sequence, 396 residues long: Calsequestrin-1 (396 aa).

The N-terminal stretch at 1–34 (MSATDRMGPRAVPGLRLALLLLLVLGTPKSGVQG) is a signal peptide. Tyrosine 43 bears the Phosphotyrosine mark. At serine 81 the chain carries Phosphoserine. Position 124 is a phosphothreonine (threonine 124). Serine 216 bears the Phosphoserine mark. N-linked (GlcNAc...) asparagine glycosylation is present at asparagine 350.

It belongs to the calsequestrin family. In terms of assembly, monomer; increases in response to a depletion of intracellular calcium. Homodimer. Homotetramer and homopolymer. Can form linear homooligomers. Ca(2+) ions promote oligomerization. Interacts (via C-terminal end and preferentially with the monomeric form) with STIM1; this interaction increases in response to a depletion of intracellular calcium, decreases both STIM1 aggregation and clustering, interaction of STIM1 with ORAI1 and store-operated Ca(2+) entry (SOCE) activity. Interacts with ASPH and TRDN. In terms of processing, N-glycosylated. In terms of tissue distribution, expressed in myoblasts (at protein level).

It localises to the endoplasmic reticulum. It is found in the sarcoplasmic reticulum. The protein resides in the sarcoplasmic reticulum lumen. Its subcellular location is the sarcoplasmic reticulum membrane. The protein localises to the mitochondrion matrix. In terms of biological role, calsequestrin is a high-capacity, moderate affinity, calcium-binding protein and thus acts as an internal calcium store in muscle. Calcium ions are bound by clusters of acidic residues at the protein surface, often at the interface between subunits. Can bind around 80 Ca(2+) ions. Regulates the release of lumenal Ca(2+) via the calcium release channel RYR1; this plays an important role in triggering muscle contraction. Negatively regulates store-operated Ca(2+) entry (SOCE) activity. This chain is Calsequestrin-1 (CASQ1), found in Homo sapiens (Human).